The chain runs to 620 residues: Chaperone protein HtpG (620 aa).

The interval 1–339 is a; substrate-binding; it reads MAKHQFQTEI…SEDLPLNVSR (339 aa). Residues 340-546 form a b region; the sequence is ELLQENRILA…ASDPMAGMAA (207 aa). Residues 547–620 form a c region; sequence MFAQMGQEMP…RVASLATKAL (74 aa).

This sequence belongs to the heat shock protein 90 family. In terms of assembly, homodimer.

It localises to the cytoplasm. In terms of biological role, molecular chaperone. Has ATPase activity. This Sulfurovum sp. (strain NBC37-1) protein is Chaperone protein HtpG.